A 306-amino-acid polypeptide reads, in one-letter code: tRNA N6-adenosine threonylcarbamoyltransferase (306 aa).

Residues His110 and His114 each coordinate Fe cation. Substrate-binding positions include 132-136 (IASGK), Asp165, Gly178, Asp182, and Asn268. Asp292 is a binding site for Fe cation.

It belongs to the KAE1 / TsaD family. Requires Fe(2+) as cofactor.

The protein resides in the cytoplasm. It carries out the reaction L-threonylcarbamoyladenylate + adenosine(37) in tRNA = N(6)-L-threonylcarbamoyladenosine(37) in tRNA + AMP + H(+). Its function is as follows. Required for the formation of a threonylcarbamoyl group on adenosine at position 37 (t(6)A37) in tRNAs that read codons beginning with adenine. Is involved in the transfer of the threonylcarbamoyl moiety of threonylcarbamoyl-AMP (TC-AMP) to the N6 group of A37, together with TsaE and TsaB. TsaD likely plays a direct catalytic role in this reaction. The chain is tRNA N6-adenosine threonylcarbamoyltransferase from Malacoplasma penetrans (strain HF-2) (Mycoplasma penetrans).